The chain runs to 324 residues: Biotin synthase 1 (324 aa).

Residues 37–256 (NAIETASLLS…VALARILMPA (220 aa)) form the Radical SAM core domain. Residues C52, C56, and C59 each coordinate [4Fe-4S] cluster. The [2Fe-2S] cluster site is built by C96, C127, C187, and R260.

It belongs to the radical SAM superfamily. Biotin synthase family. As to quaternary structure, homodimer. [4Fe-4S] cluster is required as a cofactor. Requires [2Fe-2S] cluster as cofactor.

The enzyme catalyses (4R,5S)-dethiobiotin + (sulfur carrier)-SH + 2 reduced [2Fe-2S]-[ferredoxin] + 2 S-adenosyl-L-methionine = (sulfur carrier)-H + biotin + 2 5'-deoxyadenosine + 2 L-methionine + 2 oxidized [2Fe-2S]-[ferredoxin]. Its pathway is cofactor biosynthesis; biotin biosynthesis; biotin from 7,8-diaminononanoate: step 2/2. Catalyzes the conversion of dethiobiotin (DTB) to biotin by the insertion of a sulfur atom into dethiobiotin via a radical-based mechanism. This chain is Biotin synthase 1, found in Paracoccus denitrificans (strain Pd 1222).